The chain runs to 63 residues: Large ribosomal subunit protein bL28 (63 aa).

This sequence belongs to the bacterial ribosomal protein bL28 family.

The polypeptide is Large ribosomal subunit protein bL28 (Clostridium novyi (strain NT)).